We begin with the raw amino-acid sequence, 396 residues long: Activity-regulated cytoskeleton-associated protein (396 aa).

Residues 54-78 (SKQVERELKGLHRSVGKLENNLDGY) are a coiled coil. Residues 89–100 (KSIKACLCRCQE) are interaction with SH3GL1 or SH3GL3. Residues 177–207 (PPAAGELPEQESVEAQQYQSWGPGEDGQPSP) are disordered. The interval 195 to 214 (QSWGPGEDGQPSPGVDTQIF) is interaction with DNM2. Ser-260 is subject to Phosphoserine; by CaMK2. Residues Lys-268 and Lys-269 each participate in a glycyl lysine isopeptide (Lys-Gly) (interchain with G-Cter in ubiquitin) cross-link. Thr-278 carries the phosphothreonine modification. The disordered stretch occupies residues 356–396 (QDGLEQAAEPSGTPLPTEDETEALTPALTSESVASDRTQPE). Polar residues predominate over residues 382–396 (ALTSESVASDRTQPE).

Belongs to the ARC/ARG3.1 family. Homooligomer; homooligomerizes into virion-like capsids. Interacts with SH3GL1/endophilin-2, SH3GL3/endophilin-3 and DNM2/DYN2. Interacts with CAMK2B (in the kinase inactive state); leading to target ARC to inactive synapses. Interacts with PSEN1. Interacts with GRIN2A and GRIN2B; inhibiting homooligomerization. Post-translationally, ubiquitinated by UBE3A, leading to its degradation by the proteasome, thereby promoting AMPA receptors (AMPARs) expression at synapses. Ubiquitinated by RNF216 at Lys-268 and Lys-269 limiting ARC protein levels induced by synaptic activity and thus regulating ARC-dependent forms of synaptic plasticity. In terms of processing, palmitoylation anchors the protein into the membrane by allowing direct insertion into the hydrophobic core of the lipid bilayer. Phosphorylation at Ser-260 by CaMK2 prevents homooligomerization into virion-like capsids by disrupting an interaction surface essential for high-order oligomerization. Phosphorylation by CaMK2 inhibits synaptic activity. In terms of tissue distribution, expressed in brain and testis. In primary visual cortex, detected in all cortical layers with the exception of layer 5: present at highest level in layers 2/3 and 4, the predominant sites of ocular dominance plasticity (at protein level). Also expressed in skin-migratory dendritic cells.

It localises to the extracellular vesicle membrane. Its subcellular location is the postsynaptic cell membrane. The protein resides in the synapse. It is found in the postsynaptic density. The protein localises to the early endosome membrane. It localises to the cell projection. Its subcellular location is the dendrite. The protein resides in the cytoplasm. It is found in the cytoskeleton. The protein localises to the cell cortex. It localises to the dendritic spine. Its subcellular location is the cytoplasmic vesicle. The protein resides in the secretory vesicle. It is found in the acrosome. The protein localises to the clathrin-coated vesicle membrane. In terms of biological role, master regulator of synaptic plasticity that self-assembles into virion-like capsids that encapsulate RNAs and mediate intercellular RNA transfer in the nervous system. ARC protein is released from neurons in extracellular vesicles that mediate the transfer of ARC mRNA into new target cells, where ARC mRNA can undergo activity-dependent translation. ARC capsids are endocytosed and are able to transfer ARC mRNA into the cytoplasm of neurons. Acts as a key regulator of synaptic plasticity: required for protein synthesis-dependent forms of long-term potentiation (LTP) and depression (LTD) and for the formation of long-term memory. Regulates synaptic plasticity by promoting endocytosis of AMPA receptors (AMPARs) in response to synaptic activity: this endocytic pathway maintains levels of surface AMPARs in response to chronic changes in neuronal activity through synaptic scaling, thereby contributing to neuronal homeostasis. Acts as a postsynaptic mediator of activity-dependent synapse elimination in the developing cerebellum by mediating elimination of surplus climbing fiber synapses. Accumulates at weaker synapses, probably to prevent their undesired enhancement. This suggests that ARC-containing virion-like capsids may be required to eliminate synaptic material. Required to transduce experience into long-lasting changes in visual cortex plasticity and for long-term memory. Involved in postsynaptic trafficking and processing of amyloid-beta A4 (APP) via interaction with PSEN1. In addition to its role in synapses, also involved in the regulation of the immune system: specifically expressed in skin-migratory dendritic cells and regulates fast dendritic cell migration, thereby regulating T-cell activation. The sequence is that of Activity-regulated cytoskeleton-associated protein from Mus musculus (Mouse).